A 244-amino-acid polypeptide reads, in one-letter code: Glucosamine-6-phosphate deaminase (244 aa).

D67 functions as the Proton acceptor; for enolization step in the catalytic mechanism. Catalysis depends on N136, which acts as the For ring-opening step. H138 serves as the catalytic Proton acceptor; for ring-opening step. The For ring-opening step role is filled by E143.

It belongs to the glucosamine/galactosamine-6-phosphate isomerase family. NagB subfamily.

The enzyme catalyses alpha-D-glucosamine 6-phosphate + H2O = beta-D-fructose 6-phosphate + NH4(+). The protein operates within amino-sugar metabolism; N-acetylneuraminate degradation; D-fructose 6-phosphate from N-acetylneuraminate: step 5/5. Catalyzes the reversible isomerization-deamination of glucosamine 6-phosphate (GlcN6P) to form fructose 6-phosphate (Fru6P) and ammonium ion. The polypeptide is Glucosamine-6-phosphate deaminase (Clostridium botulinum (strain Okra / Type B1)).